A 1131-amino-acid chain; its full sequence is Probable chloride channel protein UM03490-D (1131 aa).

12 consecutive transmembrane segments (helical) span residues 137-157 (GVIVLVGILIGLNMGVISLAT), 206-226 (VTVTASIGAAAAATDSAPILP), 305-325 (FPAWIIYMLFAGLLSFICAHL), 341-361 (IKCILAGFVINGYLGFWTLAI), 380-397 (GPAVHVACCIGNVVASFF), 414-434 (SSAAGVAVAFGSPIGGVLFSL), 485-505 (FEIMFYILIGIFGGLYGAFVI), 518-538 (YLVKHGVSEVVVLATLTAFVG), 577-597 (MVNSLLLATVLRTALVIVSYG), 603-623 (GIFVPSMAIGATFGRMVGILV), 643-663 (VPCITPGTYAFLGAAAALAGV), and 680-702 (ALTYILPTMIVVGITKGVADWFS). Disordered stretches follow at residues 815 to 835 (DGVESSAHGAQQQQPDLLSVA) and 858 to 928 (ATGA…AGGG). Residues 866-877 (GLGSTSATGVAS) show a composition bias toward low complexity. One can recognise a CBS domain in the interval 944–1000 (IDPTPLIVQPGMPLETVMDMFKNLGPRVILVVEYGRLSGLVTVKDVLKRIAMQEKAE). The span at 1061 to 1078 (RASASRGGAPGSQAGQAR) shows a compositional bias: low complexity. A disordered region spans residues 1061–1131 (RASASRGGAP…VLGAQDDDDE (71 aa)). Polar residues predominate over residues 1104–1113 (STRQTSATKN).

The protein belongs to the chloride channel (TC 2.A.49) family.

Its subcellular location is the membrane. Its function is as follows. Voltage-gated chloride channel. This chain is Probable chloride channel protein UM03490-D, found in Mycosarcoma maydis (Corn smut fungus).